Consider the following 318-residue polypeptide: Quinolinate synthase (318 aa).

Positions 34 and 51 each coordinate iminosuccinate. Cys96 is a [4Fe-4S] cluster binding site. Iminosuccinate contacts are provided by residues 122–124 (YIN) and Ser139. Cys182 contributes to the [4Fe-4S] cluster binding site. Residues 208 to 210 (HPE) and Thr225 contribute to the iminosuccinate site. Position 275 (Cys275) interacts with [4Fe-4S] cluster.

It belongs to the quinolinate synthase family. Type 2 subfamily. The cofactor is [4Fe-4S] cluster.

It localises to the cytoplasm. It carries out the reaction iminosuccinate + dihydroxyacetone phosphate = quinolinate + phosphate + 2 H2O + H(+). It participates in cofactor biosynthesis; NAD(+) biosynthesis; quinolinate from iminoaspartate: step 1/1. Catalyzes the condensation of iminoaspartate with dihydroxyacetone phosphate to form quinolinate. This is Quinolinate synthase from Synechocystis sp. (strain ATCC 27184 / PCC 6803 / Kazusa).